The chain runs to 418 residues: Serine--tRNA ligase (418 aa).

L-serine is bound at residue 231–233 (TAE). 262–264 (RSE) contributes to the ATP binding site. Glu-285 is a binding site for L-serine. 349–352 (EISS) is a binding site for ATP. An L-serine-binding site is contributed by Ser-385.

This sequence belongs to the class-II aminoacyl-tRNA synthetase family. Type-1 seryl-tRNA synthetase subfamily. In terms of assembly, homodimer. The tRNA molecule binds across the dimer.

It is found in the cytoplasm. The enzyme catalyses tRNA(Ser) + L-serine + ATP = L-seryl-tRNA(Ser) + AMP + diphosphate + H(+). It carries out the reaction tRNA(Sec) + L-serine + ATP = L-seryl-tRNA(Sec) + AMP + diphosphate + H(+). The protein operates within aminoacyl-tRNA biosynthesis; selenocysteinyl-tRNA(Sec) biosynthesis; L-seryl-tRNA(Sec) from L-serine and tRNA(Sec): step 1/1. Functionally, catalyzes the attachment of serine to tRNA(Ser). Is also able to aminoacylate tRNA(Sec) with serine, to form the misacylated tRNA L-seryl-tRNA(Sec), which will be further converted into selenocysteinyl-tRNA(Sec). In Ureaplasma urealyticum serovar 10 (strain ATCC 33699 / Western), this protein is Serine--tRNA ligase.